The following is a 462-amino-acid chain: CD-NTase-associated protein 4 (462 aa).

The tract at residues 1–226 (MSASLLEKQS…FENFICHALE (226 aa)) is N-terminal endonuclease domain. Active-site residues include Asp50, Glu67, and Lys69. Asp50 provides a ligand contact to Mg(2+). The tract at residues 235 to 462 (DPIKINLSAS…QYIPTAELNL (228 aa)) is C-terminal SAVED domain. 2',3',3'-c-tri-AMP-binding positions include 299–301 (KQR), Trp449, and Tyr454.

The protein belongs to the Cap4 nuclease family. In terms of assembly, a monomer in the absence of ligand, in its presence it forms oligomers. The cofactor is a divalent metal cation.

DNase activity is activated upon ligand binding. Inhibited by EDTA. Functionally, effector DNase of a CBASS antivirus system. CBASS (cyclic oligonucleotide-based antiphage signaling system) provides immunity against bacteriophage. The CD-NTase protein synthesizes cyclic nucleotides in response to infection; these serve as specific second messenger signals. The signals activate a diverse range of effectors, leading to bacterial cell death and thus abortive phage infection. A type II-C(AAAA) CBASS system. In terms of biological role, binds cyclic nucleotide second messengers (synthesized by CdnD, the cognate CD-NTase in the CBASS operon). Ligand binding activates it to endonucleolytically degrade dsDNA to approximately 6 bp length fragments, with a preference for 5'-C or 5'-G cleavage site. The minor product of CdnD is the activating nucleotide; also binds the major product (2',3',3'-cyclic AMP-AMP-AMP) but is not activated by it. Only binds DNA in the presence of ligand. Is not activated by c-di-AMP, c-di-GMP, 3'3'-cyclic GMP-AMP (3'3'-cGAMP) or 3',3',3'-cyclic AMP-AMP-GMP. The chain is CD-NTase-associated protein 4 from Acinetobacter sp. (strain ATCC 27244 / 9458).